The primary structure comprises 361 residues: Molybdenum import ATP-binding protein ModC (361 aa).

Residues 1-228 (MLNINIEKQF…EQMRPWVPLQ (228 aa)) enclose the ABC transporter domain. 31-38 (GRSGAGKT) provides a ligand contact to ATP. Residues 289-356 (GSSIRNLLRG…IKGVTMTQMD (68 aa)) form the Mop domain.

It belongs to the ABC transporter superfamily. Molybdate importer (TC 3.A.1.8) family. In terms of assembly, the complex is composed of two ATP-binding proteins (ModC), two transmembrane proteins (ModB) and a solute-binding protein (ModA).

The protein localises to the cell inner membrane. The catalysed reaction is molybdate(out) + ATP + H2O = molybdate(in) + ADP + phosphate + H(+). Functionally, part of the ABC transporter complex ModABC involved in molybdenum import. Responsible for energy coupling to the transport system. The polypeptide is Molybdenum import ATP-binding protein ModC (Shewanella sp. (strain MR-4)).